Reading from the N-terminus, the 150-residue chain is Deoxyuridine 5'-triphosphate nucleotidohydrolase (150 aa).

Substrate-binding positions include 69-71 (RSG), Asn82, 86-88 (LID), and Met96.

It belongs to the dUTPase family. Mg(2+) serves as cofactor.

The catalysed reaction is dUTP + H2O = dUMP + diphosphate + H(+). It functions in the pathway pyrimidine metabolism; dUMP biosynthesis; dUMP from dCTP (dUTP route): step 2/2. Functionally, this enzyme is involved in nucleotide metabolism: it produces dUMP, the immediate precursor of thymidine nucleotides and it decreases the intracellular concentration of dUTP so that uracil cannot be incorporated into DNA. The polypeptide is Deoxyuridine 5'-triphosphate nucleotidohydrolase (Leptothrix cholodnii (strain ATCC 51168 / LMG 8142 / SP-6) (Leptothrix discophora (strain SP-6))).